We begin with the raw amino-acid sequence, 376 residues long: 26S proteasome non-ATPase regulatory subunit 13 (376 aa).

In terms of domain architecture, PCI spans 171–338 (SYYKDALRFL…KRVHMTWVQP (168 aa)). K298 is modified (N6-acetyllysine).

Belongs to the proteasome subunit S11 family. In terms of assembly, component of the 19S proteasome regulatory particle complex. The 26S proteasome consists of a 20S core particle (CP) and two 19S regulatory subunits (RP). The regulatory particle is made of a lid composed of 9 subunits including PSMD13, a base containing 6 ATPases and few additional components.

Its function is as follows. Component of the 26S proteasome, a multiprotein complex involved in the ATP-dependent degradation of ubiquitinated proteins. This complex plays a key role in the maintenance of protein homeostasis by removing misfolded or damaged proteins, which could impair cellular functions, and by removing proteins whose functions are no longer required. Therefore, the proteasome participates in numerous cellular processes, including cell cycle progression, apoptosis, or DNA damage repair. In Mus musculus (Mouse), this protein is 26S proteasome non-ATPase regulatory subunit 13 (Psmd13).